A 594-amino-acid chain; its full sequence is A-type ATP synthase subunit A (594 aa).

An ATP-binding site is contributed by 236-243 (GPFGSGKT).

It belongs to the ATPase alpha/beta chains family. Has multiple subunits with at least A(3), B(3), C, D, E, F, H, I and proteolipid K(x).

It is found in the cell membrane. The enzyme catalyses ATP + H2O + 4 H(+)(in) = ADP + phosphate + 5 H(+)(out). Functionally, component of the A-type ATP synthase that produces ATP from ADP in the presence of a proton gradient across the membrane. The A chain is the catalytic subunit. The polypeptide is A-type ATP synthase subunit A (Pyrobaculum calidifontis (strain DSM 21063 / JCM 11548 / VA1)).